Consider the following 264-residue polypeptide: MTKTWPPRTVIRKSGGLRGMRTLESALHRGGLGPVAGVDEVGRGACAGPLVVAACVLGPGRIASLAALDDSKKLSEQAREKLFPLICRYAVAYHVVFIPSAEVDRHGVHVANIEGMRRAVAGLAVRPGYVLSDGFRVPGLPMPSLPVIGGDAAAACIAAASVLAKVSRDRVMVALDADHPGYGFAEHKGYSTPAHSRALARLGPCPQHRYSFINVRRVASGSNTAEVADGQPDPRDGTAQTGEGRWSKSSHPATMRATGRAQGT.

An RNase H type-2 domain is found at 33–224 (GPVAGVDEVG…VRRVASGSNT (192 aa)). 3 residues coordinate a divalent metal cation: Asp-39, Glu-40, and Asp-133. The segment at 222–264 (SNTAEVADGQPDPRDGTAQTGEGRWSKSSHPATMRATGRAQGT) is disordered.

It belongs to the RNase HII family. Mn(2+) serves as cofactor. Requires Mg(2+) as cofactor.

The protein resides in the cytoplasm. It catalyses the reaction Endonucleolytic cleavage to 5'-phosphomonoester.. Its function is as follows. Endonuclease that specifically degrades the RNA of RNA-DNA hybrids. This chain is Ribonuclease HII, found in Mycobacterium bovis (strain ATCC BAA-935 / AF2122/97).